We begin with the raw amino-acid sequence, 107 residues long: Colipase (107 aa).

Positions 1-17 are cleaved as a signal peptide; it reads MEKVLVLLLVALSVAYA. A propeptide spans 18–22 (enterostatin, activation peptide); sequence APGPR. Disulfide bonds link Cys34–Cys45, Cys40–Cys56, Cys44–Cys78, Cys66–Cys86, and Cys80–Cys104.

It belongs to the colipase family. As to quaternary structure, forms a 1:1 stoichiometric complex with pancreatic lipase. As to expression, expressed by the pancreas.

It is found in the secreted. In terms of biological role, colipase is a cofactor of pancreatic lipase. It allows the lipase to anchor itself to the lipid-water interface. Without colipase the enzyme is washed off by bile salts, which have an inhibitory effect on the lipase. Functionally, enterostatin has a biological activity as a satiety signal. The chain is Colipase (CLPS) from Oryctolagus cuniculus (Rabbit).